The sequence spans 359 residues: Biotin synthase (359 aa).

The Radical SAM core domain occupies 67–302; the sequence is CCGNRVDLCS…QQILRYAGGR (236 aa). 3 residues coordinate [4Fe-4S] cluster: cysteine 85, cysteine 89, and cysteine 92. The [2Fe-2S] cluster site is built by cysteine 130, cysteine 167, cysteine 227, and arginine 297.

Belongs to the radical SAM superfamily. Biotin synthase family. As to quaternary structure, homodimer. [4Fe-4S] cluster serves as cofactor. The cofactor is [2Fe-2S] cluster.

The enzyme catalyses (4R,5S)-dethiobiotin + (sulfur carrier)-SH + 2 reduced [2Fe-2S]-[ferredoxin] + 2 S-adenosyl-L-methionine = (sulfur carrier)-H + biotin + 2 5'-deoxyadenosine + 2 L-methionine + 2 oxidized [2Fe-2S]-[ferredoxin]. Its pathway is cofactor biosynthesis; biotin biosynthesis; biotin from 7,8-diaminononanoate: step 2/2. In terms of biological role, catalyzes the conversion of dethiobiotin (DTB) to biotin by the insertion of a sulfur atom into dethiobiotin via a radical-based mechanism. The sequence is that of Biotin synthase from Gloeothece citriformis (strain PCC 7424) (Cyanothece sp. (strain PCC 7424)).